The following is a 470-amino-acid chain: Acetyl-CoA decarbonylase/synthase complex subunit beta 2 (470 aa).

Residues Cys-190, Cys-193, Cys-279, and Cys-281 each contribute to the [Ni-Fe-S] cluster site.

It belongs to the CdhC family. In terms of assembly, monomer. The ACDS complex is made up of alpha, epsilon, beta, gamma and delta chains with a probable stoichiometry of (alpha(2)epsilon(2))(4)-beta(8)-(gamma(1)delta(1))(8) (Potential). It depends on [Ni-Fe-S] cluster as a cofactor.

The enzyme catalyses Co(I)-[corrinoid Fe-S protein] + acetyl-CoA + H(+) = methyl-Co(III)-[corrinoid Fe-S protein] + CO + CoA. Its pathway is one-carbon metabolism; methanogenesis from acetate. In terms of biological role, part of a complex that catalyzes the reversible cleavage of acetyl-CoA, allowing growth on acetate as sole source of carbon and energy. The alpha-epsilon complex generates CO from CO(2), while the beta subunit (this protein) combines the CO with CoA and a methyl group to form acetyl-CoA. The methyl group, which is incorporated into acetyl-CoA, is transferred to the beta subunit by a corrinoid iron-sulfur protein (the gamma-delta complex). The chain is Acetyl-CoA decarbonylase/synthase complex subunit beta 2 (cdhC2) from Methanosarcina mazei (strain ATCC BAA-159 / DSM 3647 / Goe1 / Go1 / JCM 11833 / OCM 88) (Methanosarcina frisia).